The following is a 224-amino-acid chain: UPF0758 protein Avin_02940 (224 aa).

The 123-residue stretch at 102 to 224 folds into the MPN domain; that stretch reads ALESPQAVRD…PLSMAEQGWL (123 aa). Residues H173, H175, and D186 each contribute to the Zn(2+) site. The JAMM motif signature appears at 173–186; it reads HNHPSGIAEPSQAD.

Belongs to the UPF0758 family.

The sequence is that of UPF0758 protein Avin_02940 from Azotobacter vinelandii (strain DJ / ATCC BAA-1303).